The primary structure comprises 52 residues: UPF0181 protein HD_1137 (52 aa).

This sequence belongs to the UPF0181 family.

In Haemophilus ducreyi (strain 35000HP / ATCC 700724), this protein is UPF0181 protein HD_1137.